A 230-amino-acid polypeptide reads, in one-letter code: Response regulator MprA (230 aa).

In terms of domain architecture, Response regulatory spans 4-118 (RILVVDDDRA…ELLARMRALL (115 aa)). The residue at position 48 (Asp-48) is a 4-aspartylphosphate. Residues 129 to 227 (SMAMRFSDLT…VRGVGYVLRE (99 aa)) constitute a DNA-binding region (ompR/PhoB-type).

Monomer. Interaction with each conserved 8-bp repeat requires tandem binding by two protein monomers. Post-translationally, phosphorylated and dephosphorylated by MprB.

Its subcellular location is the cytoplasm. Member of the two-component regulatory system MprB/MprA which contributes to maintaining a balance among several systems involved in stress resistance and is required for establishment and maintenance of persistent infection in the host. Functions as a transcriptional regulator that recognizes a 19-bp nucleotide motif comprizing two loosely conserved 8-bp direct DNA-binding motif repeats separated by a 3-bp spacer region. MprB/MprA up-regulates expression of mprA and pepD. This is Response regulator MprA (mprA) from Mycobacterium bovis (strain ATCC BAA-935 / AF2122/97).